The chain runs to 205 residues: Small ribosomal subunit protein uS4 (205 aa).

The segment at 19–45 (IWGRPKSPVNRREYGPGQHGQRRKGKL) is disordered. Positions 94–157 (SRLDAVVYRA…KQLVIVLEAV (64 aa)) constitute an S4 RNA-binding domain.

It belongs to the universal ribosomal protein uS4 family. Part of the 30S ribosomal subunit. Contacts protein S5. The interaction surface between S4 and S5 is involved in control of translational fidelity.

In terms of biological role, one of the primary rRNA binding proteins, it binds directly to 16S rRNA where it nucleates assembly of the body of the 30S subunit. With S5 and S12 plays an important role in translational accuracy. The sequence is that of Small ribosomal subunit protein uS4 from Brucella anthropi (strain ATCC 49188 / DSM 6882 / CCUG 24695 / JCM 21032 / LMG 3331 / NBRC 15819 / NCTC 12168 / Alc 37) (Ochrobactrum anthropi).